The primary structure comprises 263 residues: MGNKNVIQKMREKTPLIHCITNYVTINDCANILLAFGASPAMCEAYDEAYDFVSISSALYINLGTLTKEQETAAILASISAKNHNVPVVIDPVGCPAIKRKVEVINRIAEVGRIDIIKGNIGEIKFLAGMDSETRGVDSLDNGENALDACTQLAKKYNCIVAATGKKDFVSDGKRGSVIKNGTEMLTKVTGAGCMLGALCAATCASFEDKLVSTTAAILSMNIAGEKAYEKAQLPGSFRIALIDNIYMISDEEIWERGNVEWK.

Residue M42 coordinates substrate. Positions 118 and 164 each coordinate ATP. Residue G191 coordinates substrate.

The protein belongs to the Thz kinase family. Mg(2+) serves as cofactor.

The catalysed reaction is 5-(2-hydroxyethyl)-4-methylthiazole + ATP = 4-methyl-5-(2-phosphooxyethyl)-thiazole + ADP + H(+). It participates in cofactor biosynthesis; thiamine diphosphate biosynthesis; 4-methyl-5-(2-phosphoethyl)-thiazole from 5-(2-hydroxyethyl)-4-methylthiazole: step 1/1. Functionally, catalyzes the phosphorylation of the hydroxyl group of 4-methyl-5-beta-hydroxyethylthiazole (THZ). In Clostridium botulinum (strain Loch Maree / Type A3), this protein is Hydroxyethylthiazole kinase 2.